The following is a 264-amino-acid chain: MSQKKAPLFEIRSGTVDALLLSPRTADMDALAAELTRRFADTPEFFSNDVIAIDVRRLAEDERLPIDRLVETLTALRARAIGVVASPEQAGWAQAFGLPLLDSHGRRPRGGNDAKDADRNDAQDAQGAPEHAQAAEAPASTSAIPPADAAAMQPGTMIVDRPLRSGQRIYARGDLVVLDLVSDGAEVIAEGNIYVYASLRGRALAGVKGNLDARIFCTCLEPQLISIAGIYRTGETPWPDAYASKPAQVRLADNTLVFEPLRMK.

The interval 103 to 147 (SHGRRPRGGNDAKDADRNDAQDAQGAPEHAQAAEAPASTSAIPPA) is disordered. Basic and acidic residues predominate over residues 110–122 (GGNDAKDADRNDA). Residues 124–147 (DAQGAPEHAQAAEAPASTSAIPPA) show a composition bias toward low complexity.

Belongs to the MinC family. In terms of assembly, interacts with MinD and FtsZ.

Its function is as follows. Cell division inhibitor that blocks the formation of polar Z ring septums. Rapidly oscillates between the poles of the cell to destabilize FtsZ filaments that have formed before they mature into polar Z rings. Prevents FtsZ polymerization. In Ralstonia pickettii (strain 12J), this protein is Probable septum site-determining protein MinC.